A 343-amino-acid chain; its full sequence is N-acetyl-gamma-glutamyl-phosphate reductase (343 aa).

C147 is an active-site residue.

This sequence belongs to the NAGSA dehydrogenase family. Type 1 subfamily.

It is found in the cytoplasm. It carries out the reaction N-acetyl-L-glutamate 5-semialdehyde + phosphate + NADP(+) = N-acetyl-L-glutamyl 5-phosphate + NADPH + H(+). Its pathway is amino-acid biosynthesis; L-arginine biosynthesis; N(2)-acetyl-L-ornithine from L-glutamate: step 3/4. Functionally, catalyzes the NADPH-dependent reduction of N-acetyl-5-glutamyl phosphate to yield N-acetyl-L-glutamate 5-semialdehyde. The polypeptide is N-acetyl-gamma-glutamyl-phosphate reductase (Listeria innocua serovar 6a (strain ATCC BAA-680 / CLIP 11262)).